Here is a 140-residue protein sequence, read N- to C-terminus: Small ribosomal subunit protein uS12 (140 aa).

A 3-methylthioaspartic acid modification is found at aspartate 102.

It belongs to the universal ribosomal protein uS12 family. As to quaternary structure, part of the 30S ribosomal subunit. Contacts proteins S8 and S17. May interact with IF1 in the 30S initiation complex.

With S4 and S5 plays an important role in translational accuracy. In terms of biological role, interacts with and stabilizes bases of the 16S rRNA that are involved in tRNA selection in the A site and with the mRNA backbone. Located at the interface of the 30S and 50S subunits, it traverses the body of the 30S subunit contacting proteins on the other side and probably holding the rRNA structure together. The combined cluster of proteins S8, S12 and S17 appears to hold together the shoulder and platform of the 30S subunit. In Bacillus cytotoxicus (strain DSM 22905 / CIP 110041 / 391-98 / NVH 391-98), this protein is Small ribosomal subunit protein uS12.